The sequence spans 539 residues: Protein lin-14 (539 aa).

Disordered stretches follow at residues 162 to 230 (PTLP…SNHS) and 262 to 293 (ETAPPLRVAPPINGTTNGTAKAGGPERKPRKP). 2 stretches are compositionally biased toward polar residues: residues 163-183 (TLPNGQIPTTIGETSLQGTDD) and 193-214 (SVDSNGQKTDSSAASAGDNQNI). Residues 274–284 (NGTTNGTAKAG) are compositionally biased toward low complexity. An involved in sequence-specific DNA-binding region spans residues 296-440 (DDIVKIVRNQ…CRRVRHAKKT (145 aa)).

Post-translationally, cleaved by caspase ced-3 in vitro. High levels in hypodermal, intestinal, body wall muscle, nerve ring, and ventral nerve cord cells of embryos and L1 animals.

It localises to the nucleus. Its function is as follows. Heterochronic protein which controls the choice of stage specific cell fates. Involved in the temporal progression of vulval fate patterning, possibly by inhibiting lin-12. Acts as a transcription factor involved in the stage-specific repression of various genes, including insulin/insulin-like growth factor gene ins-33 and neuropeptide-encoding gene nlp-45. Binds to the consensus sequence 5'-[CT]GGA[AG]-3' in the regulatory elements of target genes. Plays a role in governing the developmental timing of male tail tip morphogenesis. Plays a role in controlling the timing of seam cell development during the larval stages. Plays a role in promoting survival at high temperatures in larvae. Involved in maintenance of the architecture of the ventral nerve cord, perhaps acting via modulating expression of the immunoglobulin domain gene zig-4. In terms of biological role, may specify L2 and later cell fates, creating a temporal switch. Functionally, may be involved in specifying L1 cell fates. This Caenorhabditis elegans protein is Protein lin-14.